Reading from the N-terminus, the 688-residue chain is MNFENLLIELGTEELPPKALRKLAESFLANFTEELTKADLAFKSAVWYAAPRRLAINVTELALAQADKIVEKRGPAVSSAFDAEGKPTKAAEGWARGNGITVDQAERLVTDKGEWLVYNAKVEGVETKSLIAAMAQRALDKLPIPKPMRWGSSKTQFIRPVHTATMLLGSELIEGELLGIKSARNVRGHRFMGTGFELDHADNYLTLLKEKGKVIADYESRKALIKADAEKAAAKIGGTADIEDDLLEEVTSLVEWPVVLTASFEEKFLNVPSEALVYTMKGDQKYFPVFDDAGKLLPNFIFVANIESKDPAQIIAGNEKVVRPRLADAEFFFNTDKKHTLESRLPSLETVLFQQQLGTLKDKVTRISALAAFIAEQTGANAVDAARAGLLSKTDLMTNMVMEFTDTQGTMGMHYARLDGETEAVALAMEEQYKPKFSGDTVPTAAVSCAVALADKLDTLVGIFGIGQAPKGAADPFALRRAAIGVLRIIVENKLPLDLVTLIAKAQELHGTNLSNANASDEVLEFLMARFRAWYQDKGIEVDVILAVLARRPTRPADFDSRINAVSHFRSLEASSALAAANKRVSNILAKVEGELPTTINSALLAEAAEQALAAKLAELQPQLAPLFANADYQQALTLLASLRESVDQFFEDVMVMADDEALKNNRLALLNNLREQFLHVADISLLQ.

The protein belongs to the class-II aminoacyl-tRNA synthetase family. Tetramer of two alpha and two beta subunits.

Its subcellular location is the cytoplasm. It carries out the reaction tRNA(Gly) + glycine + ATP = glycyl-tRNA(Gly) + AMP + diphosphate. The polypeptide is Glycine--tRNA ligase beta subunit (Shewanella sp. (strain ANA-3)).